A 413-amino-acid polypeptide reads, in one-letter code: Serine hydroxymethyltransferase (413 aa).

(6S)-5,6,7,8-tetrahydrofolate contacts are provided by residues leucine 120 and 124–126 (GHL). Lysine 228 carries the post-translational modification N6-(pyridoxal phosphate)lysine.

It belongs to the SHMT family. In terms of assembly, homodimer. The cofactor is pyridoxal 5'-phosphate.

Its subcellular location is the cytoplasm. The enzyme catalyses (6R)-5,10-methylene-5,6,7,8-tetrahydrofolate + glycine + H2O = (6S)-5,6,7,8-tetrahydrofolate + L-serine. It functions in the pathway one-carbon metabolism; tetrahydrofolate interconversion. The protein operates within amino-acid biosynthesis; glycine biosynthesis; glycine from L-serine: step 1/1. Functionally, catalyzes the reversible interconversion of serine and glycine with tetrahydrofolate (THF) serving as the one-carbon carrier. This reaction serves as the major source of one-carbon groups required for the biosynthesis of purines, thymidylate, methionine, and other important biomolecules. Also exhibits THF-independent aldolase activity toward beta-hydroxyamino acids, producing glycine and aldehydes, via a retro-aldol mechanism. The sequence is that of Serine hydroxymethyltransferase from Agathobacter rectalis (strain ATCC 33656 / DSM 3377 / JCM 17463 / KCTC 5835 / VPI 0990) (Eubacterium rectale).